The following is a 238-amino-acid chain: MRLSEILTVALVTGATAYNLPNNLKQIYDKHKGKCSKVLAKGFTNGDASQGKSFSYCGDIPGAIFISSSKGYTNMDIDCDGANNSAGKCANDPSGQGETAFKSDVKKFGISDLDANIHPYVVFGNEDHSPKFKPQSHGMQPLSVMAVVCNGQLHYGIWGDTNGGVSTGEASISLADLCFPNEHLDGNHGHDPNDVLFIGFTSKDAVPGATAKWKAKNAKEFEDSIKSIGDKLVAGLKA.

A signal peptide spans 1 to 17 (MRLSEILTVALVTGATA). An N-linked (GlcNAc...) asparagine glycan is attached at N83.

It belongs to the glycosyl hydrolase 75 family.

The protein localises to the secreted. It carries out the reaction Endohydrolysis of beta-(1-&gt;4)-linkages between D-glucosamine residues in a partly acetylated chitosan.. Its function is as follows. Chitosanase catalyzing the endo-type cleavage of chitosan, the deacylated form of chitin. Chitosanase may be crucial in the degradation of the deacetylated portion of chitin in the fungal cell wall. Chitoolisaccharides produced by the hydrolysis of partially N-acetylated chitosan are known to have many biological activities, including antibacterial activity, immune-enhancing effects, and elicitor activity. The chitosans with higher degrees of deacetylation were shown to be the better substrates. Chitodimer, chitotrimer, and chitotetramer are the major products but monoacetyl chitodimer, monoacetyl chitotrimer, and monoacetyl chitotetramer are also produced. The polypeptide is Endo-chitosanase (csn) (Aspergillus fumigatus (Neosartorya fumigata)).